The primary structure comprises 118 residues: Inner membrane protein YhaI (118 aa).

The Periplasmic portion of the chain corresponds to 1-25 (MQWYLSVLKNYVGFSGRARRKEYWM). Residues 26-46 (FTLINAIVGAIINVIQLILGL) traverse the membrane as a helical segment. Position 47 (E47) is a topological domain, cytoplasmic. The chain crosses the membrane as a helical span at residues 48–68 (LPYLSMLYLLATFLPVLALAI). Over 69–77 (RRLHDTDRS) the chain is Periplasmic. The helical transmembrane segment at 78-98 (GAWALLFFVPFIGWLVLLVFF) threads the bilayer. Residues 99–118 (CTEGTSGSNRYGNDPKFGSN) are Cytoplasmic-facing.

This sequence to E.coli YhaH.

The protein localises to the cell inner membrane. In Escherichia coli O157:H7, this protein is Inner membrane protein YhaI (yhaI).